A 273-amino-acid chain; its full sequence is Inositol monophosphatase 1 (273 aa).

Glu71, Asp91, Val93, and Asp94 together coordinate Mg(2+). Substrate is bound at residue Glu71. Residues 93 to 96 (VDGT), 194 to 196 (GSC), and Asp221 contribute to the substrate site. Asp221 contributes to the Mg(2+) binding site.

This sequence belongs to the inositol monophosphatase superfamily. Mg(2+) is required as a cofactor. Expressed in seedlings, flowers, young and matures green fruits. Detected in roots and stems.

The enzyme catalyses a myo-inositol phosphate + H2O = myo-inositol + phosphate. The protein operates within polyol metabolism; myo-inositol biosynthesis; myo-inositol from D-glucose 6-phosphate: step 2/2. Responsible for the provision of inositol required for synthesis of phosphatidylinositol and polyphosphoinositides. This is Inositol monophosphatase 1 (IMP1) from Solanum lycopersicum (Tomato).